Here is a 429-residue protein sequence, read N- to C-terminus: Chaperone SurA (429 aa).

A signal peptide spans 1–19 (MKKTLLALLIASVMQSALA). 2 PpiC domains span residues 172–273 (RTEY…KLVD) and 283–381 (VEQY…LVEG).

It localises to the periplasm. It catalyses the reaction [protein]-peptidylproline (omega=180) = [protein]-peptidylproline (omega=0). In terms of biological role, chaperone involved in the correct folding and assembly of outer membrane proteins. Recognizes specific patterns of aromatic residues and the orientation of their side chains, which are found more frequently in integral outer membrane proteins. May act in both early periplasmic and late outer membrane-associated steps of protein maturation. In Chromobacterium violaceum (strain ATCC 12472 / DSM 30191 / JCM 1249 / CCUG 213 / NBRC 12614 / NCIMB 9131 / NCTC 9757 / MK), this protein is Chaperone SurA.